Here is a 105-residue protein sequence, read N- to C-terminus: Ketoisovalerate oxidoreductase subunit VorD (105 aa).

2 4Fe-4S ferredoxin-type domains span residues 44 to 73 (FKPVVNEEKCVKCYICWKYCPEPAIYIKPD) and 74 to 103 (GYVAIDYDYCKGCGICANECPTKAITMIKE). Residues Cys53, Cys56, Cys59, Cys63, Cys83, Cys86, Cys89, and Cys93 each contribute to the [4Fe-4S] cluster site.

Heterotetramer of one alpha, one beta, one delta and one gamma chain. [4Fe-4S] cluster is required as a cofactor.

The enzyme catalyses 3-methyl-2-oxobutanoate + 2 oxidized [2Fe-2S]-[ferredoxin] + CoA = 2-methylpropanoyl-CoA + 2 reduced [2Fe-2S]-[ferredoxin] + CO2 + H(+). The polypeptide is Ketoisovalerate oxidoreductase subunit VorD (vorD) (Pyrococcus furiosus (strain ATCC 43587 / DSM 3638 / JCM 8422 / Vc1)).